The primary structure comprises 876 residues: Leucine--tRNA ligase (876 aa).

Residues 42–52 (PYPSGKLHMGH) carry the 'HIGH' region motif. The 'KMSKS' region motif lies at 634 to 638 (KMSKS). ATP is bound at residue K637.

Belongs to the class-I aminoacyl-tRNA synthetase family.

It is found in the cytoplasm. The enzyme catalyses tRNA(Leu) + L-leucine + ATP = L-leucyl-tRNA(Leu) + AMP + diphosphate. The sequence is that of Leucine--tRNA ligase from Neisseria gonorrhoeae (strain NCCP11945).